Here is a 306-residue protein sequence, read N- to C-terminus: Transcription initiation factor IIB 2 (306 aa).

The TFIIB-type zinc-finger motif lies at 6 to 37; it reads PKRVCPICGSTEFIYDPRRGEIVCAKCGYVIE. Positions 10, 13, 29, and 32 each coordinate Zn(2+). Tandem repeats lie at residues 123–206 and 217–298.

It belongs to the TFIIB family.

In terms of biological role, stabilizes TBP binding to an archaeal box-A promoter. Also responsible for recruiting RNA polymerase II to the pre-initiation complex (DNA-TBP-TFIIB). This chain is Transcription initiation factor IIB 2, found in Thermococcus kodakarensis (strain ATCC BAA-918 / JCM 12380 / KOD1) (Pyrococcus kodakaraensis (strain KOD1)).